A 122-amino-acid polypeptide reads, in one-letter code: Large ribosomal subunit protein uL18 (122 aa).

Residues 1–26 form a disordered region; that stretch reads MSNLSRKQQTQKRHRRLRRHLKGTAQ. The span at 9–22 shows a compositional bias: basic residues; that stretch reads QTQKRHRRLRRHLK.

Belongs to the universal ribosomal protein uL18 family. As to quaternary structure, part of the 50S ribosomal subunit; part of the 5S rRNA/L5/L18/L25 subcomplex. Contacts the 5S and 23S rRNAs.

In terms of biological role, this is one of the proteins that bind and probably mediate the attachment of the 5S RNA into the large ribosomal subunit, where it forms part of the central protuberance. This is Large ribosomal subunit protein uL18 from Prochlorococcus marinus (strain MIT 9313).